The chain runs to 114 residues: uncharacterized protein (114 aa).

The next 3 membrane-spanning stretches (helical) occupy residues 38–60, 64–86, and 91–113; these read PLWF…TAGI, YAAI…AHMF, and SVIM…MGSY.

The protein resides in the cell membrane. This is an uncharacterized protein from Bacillus subtilis (strain 168).